A 1132-amino-acid polypeptide reads, in one-letter code: Phospholipid-transporting ATPase IG (1132 aa).

Residues 1–66 (MQMVPSLPPA…NFLPKNLFEQ (66 aa)) lie on the Cytoplasmic side of the membrane. A helical membrane pass occupies residues 67 to 85 (FRRIANFYFLIIFLVQVTV). Asp86 is a topological domain (extracellular). A helical membrane pass occupies residues 87 to 107 (TPTSPVTSGLPLFFVITVTAI). Over 108-290 (KQGYEDCLRH…SQKRSAVEKS (183 aa)) the chain is Cytoplasmic. A helical transmembrane segment spans residues 291–311 (INAFLIVYLFILLTKAAVCTT). At 312–346 (LKYVWQSTPYNDEPWYNQKTQKERETLKVLKMFTD) the chain is on the extracellular side. Residues 347–367 (FLSFMVLFNFIIPVSMYVTVE) form a helical membrane-spanning segment. At 368–879 (MQKFLGSFFI…YVRIAHLVQY (512 aa)) the chain is on the cytoplasmic side. Asp412 functions as the 4-aspartylphosphate intermediate in the catalytic mechanism. Asp412, Lys413, and Thr414 together coordinate ATP. Asp412 contributes to the Mg(2+) binding site. A Mg(2+)-binding site is contributed by Thr414. Ser445 is modified (phosphoserine). ATP is bound by residues Glu501, Phe543, Lys566, Arg597, Thr677, Gly678, Asp679, Arg792, and Lys798. Asp819 contacts Mg(2+). ATP contacts are provided by Asn822 and Asp823. Asp823 contributes to the Mg(2+) binding site. The chain crosses the membrane as a helical span at residues 880–900 (FFYKNLCFILPQFLYQFFCGF). Topologically, residues 901-908 (SQQPLYDA) are extracellular. The chain crosses the membrane as a helical span at residues 909–929 (AYLTMYNICFTSLPILAYSLL). Residues 930–955 (EQHINIDTLTSDPRLYMKISGNAMLQ) are Cytoplasmic-facing. The chain crosses the membrane as a helical span at residues 956–976 (LGPFLYWTFLAAFEGTVFFFG). The Extracellular segment spans residues 977-995 (TYFLFQTASLEENGKVYGN). Residues 996–1016 (WTFGTIVFTVLVFTVTLKLAL) traverse the membrane as a helical segment. Topologically, residues 1017 to 1026 (DTRFWTWINH) are cytoplasmic. Residues 1027–1047 (FVIWGSLAFYVFFSFFWGGII) form a helical membrane-spanning segment. At 1048–1069 (WPFLKQQRMYFVFAQMLSSVST) the chain is on the extracellular side. The helical transmembrane segment at 1070 to 1090 (WLAIILLIFISLFPEILLIVL) threads the bilayer. Residues 1091–1132 (KNVRRRSARRNLSCRRASDSLSARPSVRPLLLRTFSDESNVL) are Cytoplasmic-facing. 3 positions are modified to phosphoserine: Ser1108, Ser1116, and Ser1126. The Di-leucine motif signature appears at 1116-1121 (SVRPLL).

This sequence belongs to the cation transport ATPase (P-type) (TC 3.A.3) family. Type IV subfamily. In terms of assembly, component of a P4-ATPase flippase complex which consists of a catalytic alpha subunit ATP11C and an accessory beta subunit TMEM30A. It depends on Mg(2+) as a cofactor. Post-translationally, proteolytically cleaved by CASP3, CASP6 and CASP7. Phosphorylated at Ser-1116 likely by PRKCA; this creates a functional di-leucine motif that is sufficient for endocytosis. Widely expressed.

The protein localises to the cell membrane. It is found in the endoplasmic reticulum membrane. The protein resides in the early endosome membrane. Its subcellular location is the recycling endosome membrane. It catalyses the reaction ATP + H2O + phospholipidSide 1 = ADP + phosphate + phospholipidSide 2.. It carries out the reaction a 1,2-diacyl-sn-glycero-3-phospho-L-serine(out) + ATP + H2O = a 1,2-diacyl-sn-glycero-3-phospho-L-serine(in) + ADP + phosphate + H(+). The catalysed reaction is a 1,2-diacyl-sn-glycero-3-phosphoethanolamine(out) + ATP + H2O = a 1,2-diacyl-sn-glycero-3-phosphoethanolamine(in) + ADP + phosphate + H(+). With respect to regulation, the flippase activity is inactivated by caspase-mediated cleavage in apoptotic cells, allowing for PS exposure on the cell surface and engulfment of apoptotic cells by macrophages. The ATPase activity is up-regulated by aminophospholipids PS and PE and down-regulated by Increasing intracellular Ca2+ levels. Functionally, catalytic component of a P4-ATPase flippase complex which catalyzes the hydrolysis of ATP coupled to the transport of aminophospholipids, phosphatidylserines (PS) and phosphatidylethanolamines (PE), from the outer to the inner leaflet of the plasma membrane. Major PS-flippase in immune cell subsets. In erythrocyte plasma membrane, it is required to maintain PS in the inner leaflet preventing its exposure on the surface. This asymmetric distribution is critical for the survival of erythrocytes in circulation since externalized PS is a phagocytic signal for erythrocyte clearance by splenic macrophages. Required for B cell differentiation past the pro-B cell stage. Seems to mediate PS flipping in pro-B cells. May be involved in the transport of cholestatic bile acids. The polypeptide is Phospholipid-transporting ATPase IG (Homo sapiens (Human)).